A 113-amino-acid chain; its full sequence is Large ribosomal subunit protein uL22 (113 aa).

The protein belongs to the universal ribosomal protein uL22 family. As to quaternary structure, part of the 50S ribosomal subunit.

In terms of biological role, this protein binds specifically to 23S rRNA; its binding is stimulated by other ribosomal proteins, e.g. L4, L17, and L20. It is important during the early stages of 50S assembly. It makes multiple contacts with different domains of the 23S rRNA in the assembled 50S subunit and ribosome. Its function is as follows. The globular domain of the protein is located near the polypeptide exit tunnel on the outside of the subunit, while an extended beta-hairpin is found that lines the wall of the exit tunnel in the center of the 70S ribosome. This is Large ribosomal subunit protein uL22 from Natranaerobius thermophilus (strain ATCC BAA-1301 / DSM 18059 / JW/NM-WN-LF).